We begin with the raw amino-acid sequence, 199 residues long: Prefoldin subunit 3 (199 aa).

The residue at position 1 (Met-1) is an N-acetylmethionine.

The protein belongs to the prefoldin subunit alpha family. Heterohexamer of two PFD-alpha type and four PFD-beta type subunits.

In terms of biological role, binds specifically to cytosolic chaperonin (c-CPN) and transfers target proteins to it. Binds to nascent polypeptide chain and promotes folding in an environment in which there are many competing pathways for nonnative proteins. In Saccharomyces cerevisiae (strain ATCC 204508 / S288c) (Baker's yeast), this protein is Prefoldin subunit 3 (PAC10).